The sequence spans 217 residues: Ribonuclease T (217 aa).

An Exonuclease domain is found at 20–194 (VVIDVETGGF…YDTDRTAELF (175 aa)). Residues D23, E25, H181, and D186 each contribute to the Mg(2+) site. Catalysis depends on H181, which acts as the Proton donor/acceptor.

This sequence belongs to the RNase T family. As to quaternary structure, homodimer. It depends on Mg(2+) as a cofactor.

Its function is as follows. Trims short 3' overhangs of a variety of RNA species, leaving a one or two nucleotide 3' overhang. Responsible for the end-turnover of tRNA: specifically removes the terminal AMP residue from uncharged tRNA (tRNA-C-C-A). Also appears to be involved in tRNA biosynthesis. In Photorhabdus laumondii subsp. laumondii (strain DSM 15139 / CIP 105565 / TT01) (Photorhabdus luminescens subsp. laumondii), this protein is Ribonuclease T.